The following is a 386-amino-acid chain: N-acetylneuraminate epimerase (386 aa).

A signal peptide spans 1-29; sequence MGMQMKNFKKMMTLMALCLSVAITTSGYA. 7 Kelch repeats span residues 51–95, 97–149, 151–186, 187–232, 235–284, 306–355, and 357–386; these read VIYV…VFLN, ELYV…VKLN, TMVLITGGVNEHIFDKYFIDIAAAAADESEKNKVIY, NYFN…VMEN, LMLI…LAGA, QNYT…SYGD, and VFLIGGENAKGKPVSSVTSFTMRDGNLLIK. Catalysis depends on Glu241, which acts as the Proton acceptor.

It belongs to the NanM family. In terms of assembly, homodimer.

The protein resides in the periplasm. It carries out the reaction N-acetyl-alpha-neuraminate = N-acetyl-beta-neuraminate. Its function is as follows. Converts alpha-N-acetylneuranimic acid (Neu5Ac) to the beta-anomer, accelerating the equilibrium between the alpha- and beta-anomers. Probably facilitates sialidase-negative bacteria to compete successfully for limited amounts of extracellular Neu5Ac, which is likely taken up in the beta-anomer. In addition, the rapid removal of sialic acid from solution might be advantageous to the bacterium to damp down host responses. The protein is N-acetylneuraminate epimerase of Salmonella choleraesuis (strain SC-B67).